A 408-amino-acid polypeptide reads, in one-letter code: Argininosuccinate synthase (408 aa).

ATP-binding positions include 11 to 19 (AYSGGLDTS) and alanine 38. Tyrosine 91 and serine 96 together coordinate L-citrulline. Glycine 121 contributes to the ATP binding site. Residues threonine 123, asparagine 127, and aspartate 128 each contribute to the L-aspartate site. Position 127 (asparagine 127) interacts with L-citrulline. L-citrulline-binding residues include arginine 131, serine 182, serine 191, glutamate 267, and tyrosine 279.

This sequence belongs to the argininosuccinate synthase family. Type 1 subfamily. Homotetramer.

The protein resides in the cytoplasm. It catalyses the reaction L-citrulline + L-aspartate + ATP = 2-(N(omega)-L-arginino)succinate + AMP + diphosphate + H(+). The protein operates within amino-acid biosynthesis; L-arginine biosynthesis; L-arginine from L-ornithine and carbamoyl phosphate: step 2/3. This chain is Argininosuccinate synthase, found in Paracoccus denitrificans (strain Pd 1222).